A 405-amino-acid chain; its full sequence is Adenylosuccinate synthetase (405 aa).

GTP-binding positions include 12–18 (GDEGKGK) and 40–42 (GHT). Residue Asp-13 is the Proton acceptor of the active site. 2 residues coordinate Mg(2+): Asp-13 and Gly-40. Residues 13–16 (DEGK), 38–41 (NAGH), Thr-121, Arg-135, Gln-213, Thr-228, and Arg-297 each bind IMP. The active-site Proton donor is His-41. Position 293–299 (293–299 (TTTGRPR)) interacts with substrate. GTP is bound by residues Arg-299, 325-327 (KMD), and 390-392 (SAG).

Belongs to the adenylosuccinate synthetase family. Homodimer. Mg(2+) is required as a cofactor.

It is found in the cytoplasm. It catalyses the reaction IMP + L-aspartate + GTP = N(6)-(1,2-dicarboxyethyl)-AMP + GDP + phosphate + 2 H(+). The protein operates within purine metabolism; AMP biosynthesis via de novo pathway; AMP from IMP: step 1/2. Functionally, plays an important role in the de novo pathway of purine nucleotide biosynthesis. Catalyzes the first committed step in the biosynthesis of AMP from IMP. This is Adenylosuccinate synthetase from Deinococcus radiodurans (strain ATCC 13939 / DSM 20539 / JCM 16871 / CCUG 27074 / LMG 4051 / NBRC 15346 / NCIMB 9279 / VKM B-1422 / R1).